The chain runs to 76 residues: RSWFSFLGEAYDGARDMWRAYSDMKEANYKNSDKYFHARGNYDAAQRGPGGVWAAEVISDARENIQKLLGHGAEDT.

The protein belongs to the SAA family. Expressed by the liver; secreted in plasma.

It is found in the secreted. In terms of biological role, major acute phase reactant. Apolipoprotein of the HDL complex. The protein is Amyloid protein A (SAA1) of Macaca mulatta (Rhesus macaque).